Here is a 423-residue protein sequence, read N- to C-terminus: Anthranilate 1,2-dioxygenase large subunit (423 aa).

The Rieske domain occupies 53–168; sequence WNFVALEAEI…VDSYRGLVFA (116 aa). Residues Cys95, His97, Cys115, and His118 each contribute to the [2Fe-2S] cluster site. Residues His223, His228, and Asp370 each coordinate Fe cation.

It belongs to the bacterial ring-hydroxylating dioxygenase alpha subunit family. As to quaternary structure, part of a multicomponent enzyme system composed of a reductase (AndAa), a ferredoxin (AndAb) and a two-subunit oxygenase component (AndAc and AndAd). Fe cation is required as a cofactor. It depends on [2Fe-2S] cluster as a cofactor.

It catalyses the reaction anthranilate + NADH + O2 + 3 H(+) = catechol + NH4(+) + CO2 + NAD(+). The enzyme catalyses anthranilate + NADPH + O2 + 3 H(+) = catechol + NH4(+) + CO2 + NADP(+). Its pathway is aromatic compound metabolism; anthranilate degradation via hydroxylation; catechol from anthranilate: step 1/1. In terms of biological role, oxygenase component of anthranilate dioxygenase multicomponent enzyme system which catalyzes the incorporation of both atoms of molecular oxygen into anthranilate to form catechol. Can also act on benzoate and salicylate but not on 2-chlorobenzoate or o-toluate. The polypeptide is Anthranilate 1,2-dioxygenase large subunit (Burkholderia cepacia (Pseudomonas cepacia)).